The primary structure comprises 663 residues: Bifunctional polymyxin resistance protein ArnA (663 aa).

Positions 1–304 (MKAVVFAYHD…ELGLVAGMRL (304 aa)) are formyltransferase ArnAFT. Catalysis depends on histidine 104, which acts as the Proton donor; for formyltransferase activity. Residues arginine 114 and 136–140 (TMRPD) contribute to the (6R)-10-formyltetrahydrofolate site. A dehydrogenase ArnADH region spans residues 316–663 (RLTRVLILGV…GAVSTGVEHD (348 aa)). NAD(+) is bound by residues aspartate 349 and 370 to 371 (DI). Residues alanine 395, tyrosine 400, and 434-435 (TS) contribute to the UDP-alpha-D-glucuronate site. Glutamate 436 (proton acceptor; for decarboxylase activity) is an active-site residue. Residues arginine 462, asparagine 494, 528–537 (QLVDGGAQKR), and tyrosine 615 each bind UDP-alpha-D-glucuronate. Arginine 621 acts as the Proton donor; for decarboxylase activity in catalysis.

This sequence in the N-terminal section; belongs to the Fmt family. UDP-L-Ara4N formyltransferase subfamily. In the C-terminal section; belongs to the NAD(P)-dependent epimerase/dehydratase family. UDP-glucuronic acid decarboxylase subfamily. In terms of assembly, homohexamer, formed by a dimer of trimers.

It catalyses the reaction UDP-alpha-D-glucuronate + NAD(+) = UDP-beta-L-threo-pentopyranos-4-ulose + CO2 + NADH. The catalysed reaction is UDP-4-amino-4-deoxy-beta-L-arabinose + (6R)-10-formyltetrahydrofolate = UDP-4-deoxy-4-formamido-beta-L-arabinose + (6S)-5,6,7,8-tetrahydrofolate + H(+). It participates in nucleotide-sugar biosynthesis; UDP-4-deoxy-4-formamido-beta-L-arabinose biosynthesis; UDP-4-deoxy-4-formamido-beta-L-arabinose from UDP-alpha-D-glucuronate: step 1/3. It functions in the pathway nucleotide-sugar biosynthesis; UDP-4-deoxy-4-formamido-beta-L-arabinose biosynthesis; UDP-4-deoxy-4-formamido-beta-L-arabinose from UDP-alpha-D-glucuronate: step 3/3. Its pathway is bacterial outer membrane biogenesis; lipopolysaccharide biosynthesis. In terms of biological role, bifunctional enzyme that catalyzes the oxidative decarboxylation of UDP-glucuronic acid (UDP-GlcUA) to UDP-4-keto-arabinose (UDP-Ara4O) and the addition of a formyl group to UDP-4-amino-4-deoxy-L-arabinose (UDP-L-Ara4N) to form UDP-L-4-formamido-arabinose (UDP-L-Ara4FN). The modified arabinose is attached to lipid A and is required for resistance to polymyxin and cationic antimicrobial peptides. The sequence is that of Bifunctional polymyxin resistance protein ArnA from Aeromonas salmonicida (strain A449).